Here is a 336-residue protein sequence, read N- to C-terminus: NmrA-like family domain-containing oxidoreductase FrzB (336 aa).

An NADP(+)-binding site is contributed by lysine 135.

It belongs to the NmrA-type oxidoreductase family.

It catalyses the reaction 4-{[(2S,5S)-5-[(4-hydroxyphenyl)methyl]-2,5-dihydropyrazin-2-yl]methyl}phenol + 2 NADPH + 2 H(+) = (S,S)-2,5-di-(p-hydroxybenzyl)piperazine + 2 NADP(+). The protein operates within secondary metabolite biosynthesis. NmrA-like family domain-containing oxidoreductase; part of the gene cluster that mediates the biosynthesis of the alkaloid (-)-FR901483, a potent immunosuppressant that shows efficacy in animal models and a probable inhibitor of purine nucleotide biosynthesis by targeting phosphoribosylpyrophosphate amidotransferase (PPAT). Within the pathway, FrzB catalyzes the reduction of 4-{[(2S,5S)-5-[(4-hydroxyphenyl)methyl]-2,5-dihydropyrazin-2-yl]methyl}phenol to produce the (S,S)-dityrosyl-piperazine intermediate. The biosynthesis of (-)-FR901483 starts with the condensation of two L-tyrosines to yield (S,S)-dityrosyl-piperazine. This process occurs in 3 steps with the non-canonical nonribosomal peptide synthetase FrzA catalyzing the reduction of L-tyrosine into L-tyrosinal, the spontaneous condensation of 2 L-tyrosinal units, and the subsequent reduction by the NmrA-like family domain-containing oxidoreductase FrzB. The cytochrome P450 monooxygenase FrzC then performs coupling between N10 and C1' to morph the piperazine into a 1,4-diazabicyclo[3.2.1]octane spiro-fused to a 2,5-cyclohexadienone. The dienone portion is further reduced to cyclohexanone by the flavin-dependent reductase FrzD. The methyltranserases (MTs) FrzE and FrzF are then involved in the methylation at the C10' amine and the C4 phenolic oxygen, respectively. The order of the two MTs appear to be interchangeable. Cleavage of the C9-N10' bond by the dioxygenase FrzG then leads to formation of a conjugated iminium. In addition to the oxidation of C9, an additional dehydrogenation between C7 and C8 can occur to give a likely shunt product. The next biosynthetic step is the intramolecular aldol condensation catalyzed by the newly identified aldolase FrzH to yield an aza-tricyclic product with the formation of a C9-C3' bond. The short-chain dehydrogenase/reductase FrzI then produces dephospho-(-)-FR901483 that is phosphorylated at C4'-OH into (-)-FR901483 by the phosphotransferase FrzJ. This chain is NmrA-like family domain-containing oxidoreductase FrzB, found in Cladobotryum sp.